A 170-amino-acid polypeptide reads, in one-letter code: Cathelicidin antimicrobial peptide (170 aa).

A signal peptide spans 1–30; the sequence is MKTQRDGHSLGWWSLVLLLLGLVMPLAIIA. A propeptide spans 31-131 (cathelin-like domain (CLD)); sequence QVLSYKEAVL…DISCDKDNKR (101 aa). Disulfide bonds link cysteine 86-cysteine 97 and cysteine 108-cysteine 125. Positions 150-162 are active core; the sequence is SKRIVQRIKDFLR.

It belongs to the cathelicidin family. As to quaternary structure, monomer, homodimer or homotrimer (in vitro). Oligomerizes as tetra- or hexamer in solution (in vitro). Proteolytically cleaved by proteinase PRTN3 into antibacterial peptide LL-37. Proteolytically cleaved by cathepsin CTSG and neutrophil elastase ELANE. In terms of processing, resistant to proteolytic degradation in solution, and when bound to both zwitterionic (mimicking mammalian membranes) and negatively charged membranes (mimicking bacterial membranes). Post-translationally, after secretion onto the skin surface, the CAMP gene product is processed by a serine protease-dependent mechanism into multiple novel antimicrobial peptides distinct from and shorter than cathelicidin LL-37. These peptides show enhanced antimicrobial action, acquiring the ability to kill skin pathogens such as S.aureus, E.coli and C.albicans. These peptides have lost the ability to stimulate CXCL8/IL8 release from keratinocytes. The peptides act synergistically, killing bacteria at lower concentrations when present together, and maintain activity at increased salt condition.

It localises to the secreted. The protein resides in the vesicle. In terms of biological role, antimicrobial protein that is an integral component of the innate immune system. Binds to bacterial lipopolysaccharides (LPS). Acts via neutrophil N-formyl peptide receptors to enhance the release of CXCL2. Postsecretory processing generates multiple cathelicidin antimicrobial peptides with various lengths which act as a topical antimicrobial defense in sweat on skin. The unprocessed precursor form, cathelicidin antimicrobial peptide, inhibits the growth of Gram-negative E.coli and E.aerogenes with efficiencies comparable to that of the mature peptide LL-37 (in vitro). Its function is as follows. Antimicrobial peptide that is an integral component of the innate immune system. Binds to bacterial lipopolysaccharides (LPS). Causes membrane permeabilization by forming transmembrane pores (in vitro). Causes lysis of E.coli. Exhibits antimicrobial activity against Gram-negative bacteria such as P.aeruginosa, S.typhimurium, E.aerogenes, E.coli and P.syringae, Gram-positive bacteria such as L.monocytogenes, S.epidermidis, S.pyogenes and S.aureus, as well as vancomycin-resistant enterococci (in vitro). Exhibits antimicrobial activity against methicillin-resistant S.aureus, P.mirabilis, and C.albicans in low-salt media, but not in media containing 100 mM NaCl (in vitro). Forms chiral supramolecular assemblies with quinolone signal (PQS) molecules of P.aeruginosa, which may lead to interference of bacterial quorum signaling and perturbance of bacterial biofilm formation. May form supramolecular fiber-like assemblies on bacterial membranes. Induces cytokine and chemokine producation as well as TNF/TNFA and CSF2/GMCSF production in normal human keratinocytes. Exhibits hemolytic activity against red blood cells. Exhibits antimicrobial activity against E.coli and B.megaterium (in vitro). The polypeptide is Cathelicidin antimicrobial peptide (Gorilla gorilla gorilla (Western lowland gorilla)).